A 309-amino-acid polypeptide reads, in one-letter code: Beta-ketoacyl-[acyl-carrier-protein] synthase III (309 aa).

Residues Cys-111 and His-236 contribute to the active site. An ACP-binding region spans residues 237-241 (QANVR). Residue Asn-266 is part of the active site.

The protein belongs to the thiolase-like superfamily. FabH family. In terms of assembly, homodimer.

It localises to the cytoplasm. The catalysed reaction is malonyl-[ACP] + acetyl-CoA + H(+) = 3-oxobutanoyl-[ACP] + CO2 + CoA. It functions in the pathway lipid metabolism; fatty acid biosynthesis. Its function is as follows. Catalyzes the condensation reaction of fatty acid synthesis by the addition to an acyl acceptor of two carbons from malonyl-ACP. Catalyzes the first condensation reaction which initiates fatty acid synthesis and may therefore play a role in governing the total rate of fatty acid production. Possesses both acetoacetyl-ACP synthase and acetyl transacylase activities. Its substrate specificity determines the biosynthesis of branched-chain and/or straight-chain of fatty acids. The polypeptide is Beta-ketoacyl-[acyl-carrier-protein] synthase III (Aquifex aeolicus (strain VF5)).